Reading from the N-terminus, the 471-residue chain is Ribulose bisphosphate carboxylase large chain 2 (471 aa).

Positions 116 and 166 each coordinate substrate. The active-site Proton acceptor is lysine 168. Lysine 170 serves as a coordination point for substrate. Residues lysine 194, aspartate 196, and glutamate 197 each coordinate Mg(2+). At lysine 194 the chain carries N6-carboxylysine. Histidine 287 (proton acceptor) is an active-site residue. Residues arginine 288, histidine 320, and serine 372 each coordinate substrate.

It belongs to the RuBisCO large chain family. Type I subfamily. In terms of assembly, heterohexadecamer of 8 large chains and 8 small chains. It depends on Mg(2+) as a cofactor.

It localises to the carboxysome. It catalyses the reaction 2 (2R)-3-phosphoglycerate + 2 H(+) = D-ribulose 1,5-bisphosphate + CO2 + H2O. It carries out the reaction D-ribulose 1,5-bisphosphate + O2 = 2-phosphoglycolate + (2R)-3-phosphoglycerate + 2 H(+). Functionally, ruBisCO catalyzes two reactions: the carboxylation of D-ribulose 1,5-bisphosphate, the primary event in carbon dioxide fixation, as well as the oxidative fragmentation of the pentose substrate. Both reactions occur simultaneously and in competition at the same active site. This Hydrogenovibrio marinus protein is Ribulose bisphosphate carboxylase large chain 2.